Here is a 469-residue protein sequence, read N- to C-terminus: Glutamine synthetase (469 aa).

The GS beta-grasp domain occupies Asn14–Thr98. Residues Pro106 to Gly469 enclose the GS catalytic domain. Mg(2+) contacts are provided by Glu131 and Glu133. Glu209 is an ATP binding site. 2 residues coordinate Mg(2+): Glu214 and Glu221. L-glutamate contacts are provided by residues Asn265–Gly266 and Gly266. His270 is a Mg(2+) binding site. ATP is bound by residues His272 to Ser274 and Ser274. Residues Arg322, Glu328, and Arg340 each contribute to the L-glutamate site. ATP contacts are provided by Arg340, Arg345, and Lys353. Position 358 (Glu358) interacts with Mg(2+). Residue Arg360 coordinates L-glutamate. Tyr398 is modified (O-AMP-tyrosine).

Belongs to the glutamine synthetase family. In terms of assembly, oligomer of 12 subunits arranged in the form of two hexameric ring. Mg(2+) serves as cofactor.

It localises to the cytoplasm. It catalyses the reaction L-glutamate + NH4(+) + ATP = L-glutamine + ADP + phosphate + H(+). The activity of this enzyme could be controlled by adenylation under conditions of abundant glutamine. Catalyzes the ATP-dependent biosynthesis of glutamine from glutamate and ammonia. This chain is Glutamine synthetase, found in Bradyrhizobium diazoefficiens (strain JCM 10833 / BCRC 13528 / IAM 13628 / NBRC 14792 / USDA 110).